We begin with the raw amino-acid sequence, 253 residues long: Triosephosphate isomerase (253 aa).

Asn-9 to Lys-11 serves as a coordination point for substrate. His-97 serves as the catalytic Electrophile. Catalysis depends on Glu-169, which acts as the Proton acceptor. Substrate contacts are provided by residues Gly-175, Ser-215, and Gly-236 to Gly-237.

This sequence belongs to the triosephosphate isomerase family. In terms of assembly, homodimer.

The protein localises to the cytoplasm. It carries out the reaction D-glyceraldehyde 3-phosphate = dihydroxyacetone phosphate. It functions in the pathway carbohydrate biosynthesis; gluconeogenesis. The protein operates within carbohydrate degradation; glycolysis; D-glyceraldehyde 3-phosphate from glycerone phosphate: step 1/1. In terms of biological role, involved in the gluconeogenesis. Catalyzes stereospecifically the conversion of dihydroxyacetone phosphate (DHAP) to D-glyceraldehyde-3-phosphate (G3P). This is Triosephosphate isomerase from Staphylococcus aureus (strain NCTC 8325 / PS 47).